The following is a 106-amino-acid chain: Glutaredoxin-1 (106 aa).

Ala-1 is modified (N-acetylalanine). One can recognise a Glutaredoxin domain in the interval 2-105 (QEFVNSKIQP…ARLKEMGALR (104 aa)). An N6-succinyllysine modification is found at Lys-8. 2 disulfides stabilise this stretch: Cys-22-Cys-25 and Cys-78-Cys-82.

This sequence belongs to the glutaredoxin family.

Its subcellular location is the cytoplasm. Functionally, has a glutathione-disulfide oxidoreductase activity in the presence of NADPH and glutathione reductase. Reduces low molecular weight disulfides and proteins. This Oryctolagus cuniculus (Rabbit) protein is Glutaredoxin-1 (GLRX).